A 348-amino-acid chain; its full sequence is Fructose-1,6-bisphosphatase class 1 2 (348 aa).

4 residues coordinate Mg(2+): glutamate 93, aspartate 117, leucine 119, and aspartate 120. Substrate contacts are provided by residues 120 to 123, asparagine 213, tyrosine 244, and lysine 274; that span reads DGSS. Glutamate 280 is a Mg(2+) binding site.

It belongs to the FBPase class 1 family. As to quaternary structure, homotetramer. Requires Mg(2+) as cofactor.

It localises to the cytoplasm. The enzyme catalyses beta-D-fructose 1,6-bisphosphate + H2O = beta-D-fructose 6-phosphate + phosphate. It functions in the pathway carbohydrate biosynthesis; gluconeogenesis. This is Fructose-1,6-bisphosphatase class 1 2 from Christiangramia forsetii (strain DSM 17595 / CGMCC 1.15422 / KT0803) (Gramella forsetii).